The sequence spans 267 residues: Heme-containing CO-sensing transcriptional regulator RcoM 2 (267 aa).

Positions 15–86 constitute a PAS domain; it reads RAETFQHKLE…KSRDKLRFLL (72 aa). Heme-binding residues include His-74 and Met-104. The HTH LytTR-type domain maps to 161 to 266; that stretch reads IPVYRKSRVI…TAQLKELLGV (106 aa).

Heme serves as cofactor.

The protein resides in the cytoplasm. Its function is as follows. One-component, b-type heme-containing aerobic sensor and transcriptional regulator that responds to CO by activating the expression of the oxidation operon cox. The polypeptide is Heme-containing CO-sensing transcriptional regulator RcoM 2 (rcoM2) (Paraburkholderia xenovorans (strain LB400)).